Reading from the N-terminus, the 1819-residue chain is U3 small nucleolar RNA-associated protein 10 (1819 aa).

An HEAT 1 repeat occupies 583 to 620; the sequence is LDFQAILPFLLVALADPSERIRREAAAALAAIGGIYKK. The next 2 helical transmembrane spans lie at 945–965 and 1001–1021; these read IQSG…AIVN and ALLL…HSVM. 4 HEAT repeats span residues 1045-1082, 1269-1306, 1313-1351, and 1775-1812; these read QTID…AFEH, LTLV…QNPE, IRVL…KYGK, and ALLP…VLGE.

It belongs to the HEATR1/UTP10 family. As to quaternary structure, component of the ribosomal small subunit (SSU) processome.

The protein resides in the nucleus. It is found in the nucleolus. The protein localises to the membrane. In terms of biological role, involved in nucleolar processing of pre-18S ribosomal RNA. Involved in ribosome biosynthesis. This chain is U3 small nucleolar RNA-associated protein 10, found in Aspergillus clavatus (strain ATCC 1007 / CBS 513.65 / DSM 816 / NCTC 3887 / NRRL 1 / QM 1276 / 107).